The primary structure comprises 82 residues: ATP synthase subunit c (82 aa).

The next 2 helical transmembrane spans lie at 3–23 (PLVA…ASLG) and 57–77 (LAFM…LLFA).

The protein belongs to the ATPase C chain family. F-type ATPases have 2 components, F(1) - the catalytic core - and F(0) - the membrane proton channel. F(1) has five subunits: alpha(3), beta(3), gamma(1), delta(1), epsilon(1). F(0) has four main subunits: a(1), b(1), b'(1) and c(10-14). The alpha and beta chains form an alternating ring which encloses part of the gamma chain. F(1) is attached to F(0) by a central stalk formed by the gamma and epsilon chains, while a peripheral stalk is formed by the delta, b and b' chains.

Its subcellular location is the cellular thylakoid membrane. In terms of biological role, f(1)F(0) ATP synthase produces ATP from ADP in the presence of a proton or sodium gradient. F-type ATPases consist of two structural domains, F(1) containing the extramembraneous catalytic core and F(0) containing the membrane proton channel, linked together by a central stalk and a peripheral stalk. During catalysis, ATP synthesis in the catalytic domain of F(1) is coupled via a rotary mechanism of the central stalk subunits to proton translocation. Its function is as follows. Key component of the F(0) channel; it plays a direct role in translocation across the membrane. A homomeric c-ring of between 10-14 subunits forms the central stalk rotor element with the F(1) delta and epsilon subunits. The sequence is that of ATP synthase subunit c from Synechococcus sp. (strain PCC 6716).